We begin with the raw amino-acid sequence, 305 residues long: Peroxisome assembly protein 26 (305 aa).

Positions 1 to 20 (MKSDSSTSAAPLRGLGGPLR) are disordered. At 1–246 (MKSDSSTSAA…RQLWDSAVSH (246 aa)) the chain is on the cytoplasmic side. The chain crosses the membrane as a helical; Signal-anchor for type II membrane protein span at residues 247 to 267 (FFSLPFKKSLLAALILCLLVV). Residues 268 to 305 (RFDPASPSSLHFLYKLAQLFRWIRKAAFSRLYQLRIRD) are Peroxisomal matrix-facing.

It belongs to the peroxin-26 family. In terms of assembly, interacts (via its cytoplasmic domain) with PEX6; interaction is direct and is ATP-dependent. Interacts with PEX1; interaction is indirect and is mediated via interaction with PEX6. Widely expressed. Highly expressed in kidney, liver, brain and skeletal muscles. Expressed at intermediate level in pancreas, placenta and heart. Weakly expressed in lung.

It localises to the peroxisome membrane. Peroxisomal docking factor that anchors PEX1 and PEX6 to peroxisome membranes. PEX26 is therefore required for the formation of the PEX1-PEX6 AAA ATPase complex, a complex that mediates the extraction of the PEX5 receptor from peroxisomal membrane. The chain is Peroxisome assembly protein 26 from Homo sapiens (Human).